The following is a 198-amino-acid chain: MSLSIDVTSLPSISSSIFKNESSSTTSTLSGKSIGRNELYVSPDAEAFNKYMLSKSPEDIGPSDSASNDPLTSFSIRSHAVKTNADAGVSMDSSTQSRPSSNVGCDQVDFSFNKAVKVNANLDSSISISTDQKREKSKKDHKNGKHYPKIEAESDSDDYVLDDSDSDDGKCKNCKYKRKYFALRMRMKHVAMQLIEDL.

The span at 17–30 (IFKNESSSTTSTLS) shows a compositional bias: low complexity. 2 disordered regions span residues 17 to 36 (IFKN…SIGR) and 53 to 73 (LSKS…PLTS). A compositionally biased stretch (polar residues) spans 64–73 (DSASNDPLTS). At S67 the chain carries Phosphoserine; by host CK1. A Mg(2+)-binding site is contributed by D92. A disordered region spans residues 129–167 (STDQKREKSKKDHKNGKHYPKIEAESDSDDYVLDDSDSD). The segment covering 153–166 (ESDSDDYVLDDSDS) has biased composition (acidic residues). A phosphoserine; by host mark is found at S154, S156, S164, and S166.

The protein belongs to the rotavirus NSP5 family. Homodimer. Interacts with VP1. Interacts with VP2. Interacts with NSP2; this interaction leads to up-regulation of NSP5 hyperphosphorylation and formation of virus factories. Interacts with NSP6. Participates in the selective exclusion of host proteins from stress granules (SG) and P bodies (PB). Also participates in the sequestration of these remodeled organelles in viral factories. Mg(2+) is required as a cofactor. Post-translationally, O-glycosylated. Hyperphosphorylated on serine residues, when in dimeric form. Phosphorylation by host CK1 is required for the hyperphosphorylation of NSP5 dimer.

It is found in the host cytoplasm. Plays an essential role in the viral genome replication. Participates, together with NSP2, in the formation of viral factories (viroplasms), which are large inclusions in the host cytoplasm where replication intermediates are assembled and viral RNA replication takes place. Orchestrates the recruitment of viroplasmic proteins such as capsid proteins to these factories. Participates in the selective exclusion of host proteins from stress granules (SG) and P bodies (PB). Also participates in the sequestration of these remodeled organelles in viral factories. The protein is Non-structural protein 5 of Rotavirus A (isolate RVA/Human/Belgium/B4106/2000/G3P11[14]) (RV-A).